The primary structure comprises 389 residues: Inner membrane transport protein YdhP (389 aa).

Residues 1-6 (MKINYP) are Cytoplasmic-facing. A helical transmembrane segment spans residues 7–27 (LLALAIGAFGIGTTEFSPMGL). At 28 to 43 (LPVIARGVDVSIPAAG) the chain is on the periplasmic side. A helical membrane pass occupies residues 44-64 (MLISAYAVGVMVGAPLMTLLL). Residues 65–70 (SHRARR) lie on the Cytoplasmic side of the membrane. The helical transmembrane segment at 71–91 (SALIFLMAIFTLGNVLSAIAP) threads the bilayer. The Periplasmic segment spans residues 92–100 (DYMTLMLSR). The chain crosses the membrane as a helical span at residues 101 to 121 (ILTSLNHGAFFGLGSVVAASV). Residues 122–130 (VPKHKQASA) lie on the Cytoplasmic side of the membrane. Residues 131-151 (VATMFMGLTLANIGGVPAATW) traverse the membrane as a helical segment. Over 152–159 (LGETIGWR) the chain is Periplasmic. The helical transmembrane segment at 160–180 (MSFLATAGLGVISMVSLFFSL) threads the bilayer. Topologically, residues 181 to 203 (PKGGAGARPEVKKELAVLMRPQV) are cytoplasmic. Residues 204–224 (LSALLTTVLGAGAMFTLYTYI) form a helical membrane-spanning segment. Over 225–236 (SPVLQSITHATP) the chain is Periplasmic. The helical transmembrane segment at 237-257 (VFVTAMLVLIGVGFSIGNYLG) threads the bilayer. The Cytoplasmic portion of the chain corresponds to 258–266 (GKLADRSVN). Residues 267–287 (GTLKGFLLLLMVIMLAIPFLA) traverse the membrane as a helical segment. At 288–290 (RNK) the chain is on the periplasmic side. A helical transmembrane segment spans residues 291–311 (FGAAISMAVWGAATFAVVPPL). The Cytoplasmic segment spans residues 312–330 (QMRVMRVASEAPGLSSSVN). The chain crosses the membrane as a helical span at residues 331–351 (IGAFNLGNALGAAAGGAVISA). Residues 352–356 (GLGYS) lie on the Periplasmic side of the membrane. A helical transmembrane segment spans residues 357–377 (FVPVMGAIVAGLALLLVFMSA). Residues 378–389 (RKQPETVCVANS) lie on the Cytoplasmic side of the membrane.

The protein belongs to the major facilitator superfamily.

The protein localises to the cell inner membrane. This chain is Inner membrane transport protein YdhP (ydhP), found in Escherichia coli O157:H7.